Consider the following 361-residue polypeptide: Phospho-N-acetylmuramoyl-pentapeptide-transferase (361 aa).

Transmembrane regions (helical) follow at residues 25–45 (RAVL…PAVI), 73–93 (TMGG…WADL), 97–117 (YVWL…VDDW), 134–154 (YFWQ…TASL), 168–188 (ATFG…IVGA), 200–220 (GLAI…AYVA), 237–257 (AGEL…FLWF), 264–284 (VFMG…VAVV), 289–309 (IILF…MIQV), and 338–358 (QVVV…LSSL).

Belongs to the glycosyltransferase 4 family. MraY subfamily. Mg(2+) is required as a cofactor.

Its subcellular location is the cell inner membrane. It catalyses the reaction UDP-N-acetyl-alpha-D-muramoyl-L-alanyl-gamma-D-glutamyl-meso-2,6-diaminopimeloyl-D-alanyl-D-alanine + di-trans,octa-cis-undecaprenyl phosphate = di-trans,octa-cis-undecaprenyl diphospho-N-acetyl-alpha-D-muramoyl-L-alanyl-D-glutamyl-meso-2,6-diaminopimeloyl-D-alanyl-D-alanine + UMP. The protein operates within cell wall biogenesis; peptidoglycan biosynthesis. Catalyzes the initial step of the lipid cycle reactions in the biosynthesis of the cell wall peptidoglycan: transfers peptidoglycan precursor phospho-MurNAc-pentapeptide from UDP-MurNAc-pentapeptide onto the lipid carrier undecaprenyl phosphate, yielding undecaprenyl-pyrophosphoryl-MurNAc-pentapeptide, known as lipid I. The chain is Phospho-N-acetylmuramoyl-pentapeptide-transferase from Thiobacillus denitrificans (strain ATCC 25259 / T1).